Consider the following 173-residue polypeptide: Lens fiber membrane intrinsic protein (173 aa).

Over methionine 1–serine 3 the chain is Cytoplasmic. Residues phenylalanine 4–alanine 24 form a helical membrane-spanning segment. Residues threonine 25 to alanine 66 lie on the Extracellular side of the membrane. Tryptophan 43 and tryptophan 61 each carry a C-linked (Man) tryptophan glycan. A glycan (N-linked (GlcNAc...) asparagine) is linked at asparagine 62. Residues phenylalanine 67–alanine 87 traverse the membrane as a helical segment. Residues glutamine 88–proline 98 are Cytoplasmic-facing. Residues phenylalanine 99 to tyrosine 119 traverse the membrane as a helical segment. The Extracellular portion of the chain corresponds to threonine 120 to tyrosine 140. A helical transmembrane segment spans residues isoleucine 141–tyrosine 161. Residues arginine 162–arginine 173 are Cytoplasmic-facing. A Phosphothreonine modification is found at threonine 171.

Belongs to the PMP-22/EMP/MP20 family. In terms of assembly, seems to be associated with itself or another lens membrane component via disulfide bonds.

Its subcellular location is the membrane. Its function is as follows. Present in the thicker 16-17 nm junctions of mammalian lens fiber cells, where it may contribute to cell junctional organization. Acts as a receptor for calmodulin. May play an important role in both lens development and cataractogenesis. This chain is Lens fiber membrane intrinsic protein (Lim2), found in Mus musculus (Mouse).